A 296-amino-acid polypeptide reads, in one-letter code: MGPTASGKTALAIELVKQYDCEIISVDSALIYKDMDIGTAKPDAAEQAAAPHRLIDIIDPAQSYSAADFRRDALAQIEDILSRGKTPLLVGGTMMYFKALLEGLSPLPGADEAIREQIAAEAEAQGWQALHDQLREIDPVSAERIHPNDPQRLARALEVYRVSGQTLTELTKTKSDVFPYDVVQFAIAPSDRKVLHRAIETRFKAMLAQGFTSEVERLKARTDLNLDLPSMRCVGYRQCWQYLDGEIDYDTMVEKAIVATRQLAKRQLTWLRGWPDLIWLESGAENNLATVMRHSR.

2 to 9 (GPTASGKT) provides a ligand contact to ATP. 4-9 (TASGKT) provides a ligand contact to substrate. Interaction with substrate tRNA stretches follow at residues 27 to 30 (DSAL), 151 to 155 (QRLAR), and 232 to 237 (RCVGYR).

It belongs to the IPP transferase family. Monomer. Requires Mg(2+) as cofactor.

It catalyses the reaction adenosine(37) in tRNA + dimethylallyl diphosphate = N(6)-dimethylallyladenosine(37) in tRNA + diphosphate. In terms of biological role, catalyzes the transfer of a dimethylallyl group onto the adenine at position 37 in tRNAs that read codons beginning with uridine, leading to the formation of N6-(dimethylallyl)adenosine (i(6)A). The sequence is that of tRNA dimethylallyltransferase from Shewanella pealeana (strain ATCC 700345 / ANG-SQ1).